The sequence spans 922 residues: Ubiquitin carboxyl-terminal hydrolase 29 (922 aa).

A disordered region spans residues 160–196; that stretch reads GILENQGGKGQNTLSSDVQTNEDILKEDNPVPNKKYK. A compositionally biased stretch (polar residues) spans 170-181; it reads QNTLSSDVQTNE. The region spanning 285 to 885 is the USP domain; that stretch reads QGFPNLGNTC…SGYIFFYMHN (601 aa). Residue cysteine 294 is the Nucleophile of the active site. Histidine 840 functions as the Proton acceptor in the catalytic mechanism.

This sequence belongs to the peptidase C19 family.

Its subcellular location is the cytoplasm. It localises to the perinuclear region. The catalysed reaction is Thiol-dependent hydrolysis of ester, thioester, amide, peptide and isopeptide bonds formed by the C-terminal Gly of ubiquitin (a 76-residue protein attached to proteins as an intracellular targeting signal).. Deubiquitinase involved in innate antiviral immunity by mediating 'Lys-48'-linked deubiquitination of CGAS, thereby promoting its stabilization. The polypeptide is Ubiquitin carboxyl-terminal hydrolase 29 (Homo sapiens (Human)).